A 381-amino-acid polypeptide reads, in one-letter code: Teichoic acid glycerol-phosphate primase (381 aa).

The protein belongs to the CDP-glycerol glycerophosphotransferase family.

It is found in the cell membrane. The enzyme catalyses N-acetyl-beta-D-mannosaminyl-(1-&gt;4)-N-acetyl-alpha-D-glucosaminyl di-trans,octa-cis-undecaprenyl diphosphate + CDP-glycerol = 4-O-[(2R)-glycerylphospho]-N-acetyl-beta-D-mannosaminyl-(1-&gt;4)-N-acetyl-alpha-D-glucosaminyl di-trans,octa-cis-undecaprenyl diphosphate + CMP + H(+). The protein operates within cell wall biogenesis; poly(glycerol phosphate) teichoic acid biosynthesis. Catalyzes the addition of a single glycerol phosphate residue to the prenoldiphosphate-linked disaccharide, as a primer for polymerisation by TagF. The sequence is that of Teichoic acid glycerol-phosphate primase (tagB) from Bacillus subtilis (strain 168).